The primary structure comprises 514 residues: Carboxysome shell carbonic anhydrase (514 aa).

The disordered stretch occupies residues 1-27; the sequence is MAYRNRNLASQTQRPLAPTAPRRRPVV. Cysteine 175 contributes to the Zn(2+) binding site. Catalysis depends on aspartate 177, which acts as the Proton acceptor. Positions 243 and 254 each coordinate Zn(2+).

Belongs to the beta-class carbonic anhydrase family. CsoSCA subfamily. As to quaternary structure, homodimer. It depends on Zn(2+) as a cofactor.

Its subcellular location is the carboxysome. The enzyme catalyses hydrogencarbonate + H(+) = CO2 + H2O. Its function is as follows. Reversible hydration of carbon dioxide. Essential for photosynthetic carbon dioxide fixation, supplies CO(2) to RuBisCO (ribulose bisphosphate carboxylase, cbbL-cbbS) in the carboxysome. The polypeptide is Carboxysome shell carbonic anhydrase (Prochlorococcus marinus (strain MIT 9313)).